The following is a 238-amino-acid chain: NADH-quinone oxidoreductase subunit C (238 aa).

A compositionally biased stretch (polar residues) spans 1 to 11; that stretch reads MSTSNGSANGT. The interval 1–20 is disordered; it reads MSTSNGSANGTNGVGLPRGD.

It belongs to the complex I 30 kDa subunit family. In terms of assembly, NDH-1 is composed of 14 different subunits. Subunits NuoB, C, D, E, F, and G constitute the peripheral sector of the complex.

The protein localises to the cell membrane. It carries out the reaction a quinone + NADH + 5 H(+)(in) = a quinol + NAD(+) + 4 H(+)(out). NDH-1 shuttles electrons from NADH, via FMN and iron-sulfur (Fe-S) centers, to quinones in the respiratory chain. The immediate electron acceptor for the enzyme in this species is believed to be a menaquinone. Couples the redox reaction to proton translocation (for every two electrons transferred, four hydrogen ions are translocated across the cytoplasmic membrane), and thus conserves the redox energy in a proton gradient. This Mycolicibacterium smegmatis (strain ATCC 700084 / mc(2)155) (Mycobacterium smegmatis) protein is NADH-quinone oxidoreductase subunit C.